The primary structure comprises 339 residues: Ribosomal RNA small subunit methyltransferase C (339 aa).

Belongs to the methyltransferase superfamily. RsmC family. Monomer.

Its subcellular location is the cytoplasm. The enzyme catalyses guanosine(1207) in 16S rRNA + S-adenosyl-L-methionine = N(2)-methylguanosine(1207) in 16S rRNA + S-adenosyl-L-homocysteine + H(+). Functionally, specifically methylates the guanine in position 1207 of 16S rRNA in the 30S particle. This chain is Ribosomal RNA small subunit methyltransferase C, found in Aliivibrio fischeri (strain ATCC 700601 / ES114) (Vibrio fischeri).